The sequence spans 217 residues: Cytochrome c biogenesis ATP-binding export protein CcmA (217 aa).

The region spanning 16 to 214 (LVLEQLSCER…AHGQAEVTEG (199 aa)) is the ABC transporter domain. ATP is bound at residue 48 to 55 (GANGAGKT).

Belongs to the ABC transporter superfamily. CcmA exporter (TC 3.A.1.107) family. As to quaternary structure, the complex is composed of two ATP-binding proteins (CcmA) and two transmembrane proteins (CcmB).

The protein resides in the cell inner membrane. It carries out the reaction heme b(in) + ATP + H2O = heme b(out) + ADP + phosphate + H(+). In terms of biological role, part of the ABC transporter complex CcmAB involved in the biogenesis of c-type cytochromes; once thought to export heme, this seems not to be the case, but its exact role is uncertain. Responsible for energy coupling to the transport system. The sequence is that of Cytochrome c biogenesis ATP-binding export protein CcmA from Alcanivorax borkumensis (strain ATCC 700651 / DSM 11573 / NCIMB 13689 / SK2).